The following is a 233-amino-acid chain: Ribitol-5-phosphate cytidylyltransferase (233 aa).

CTP is bound by residues Leu7–Gly10 and Gly80–Thr86.

The protein belongs to the IspD/TarI cytidylyltransferase family. TarI subfamily.

The enzyme catalyses D-ribitol 5-phosphate + CTP + H(+) = CDP-L-ribitol + diphosphate. The protein operates within cell wall biogenesis; poly(ribitol phosphate) teichoic acid biosynthesis. Its function is as follows. Catalyzes the transfer of the cytidylyl group of CTP to D-ribitol 5-phosphate. The polypeptide is Ribitol-5-phosphate cytidylyltransferase (Lactiplantibacillus plantarum (strain ATCC BAA-793 / NCIMB 8826 / WCFS1) (Lactobacillus plantarum)).